The chain runs to 353 residues: 3-dehydroquinate synthase (353 aa).

NAD(+) is bound by residues 60-65 (AGDMNK), 94-98 (GMITD), 118-119 (TT), lysine 131, and lysine 140. Zn(2+)-binding residues include glutamate 173, histidine 234, and histidine 253.

The protein belongs to the sugar phosphate cyclases superfamily. Dehydroquinate synthase family. NAD(+) serves as cofactor. Requires Co(2+) as cofactor. It depends on Zn(2+) as a cofactor.

The protein resides in the cytoplasm. The enzyme catalyses 7-phospho-2-dehydro-3-deoxy-D-arabino-heptonate = 3-dehydroquinate + phosphate. It participates in metabolic intermediate biosynthesis; chorismate biosynthesis; chorismate from D-erythrose 4-phosphate and phosphoenolpyruvate: step 2/7. In terms of biological role, catalyzes the conversion of 3-deoxy-D-arabino-heptulosonate 7-phosphate (DAHP) to dehydroquinate (DHQ). The protein is 3-dehydroquinate synthase of Parabacteroides distasonis (strain ATCC 8503 / DSM 20701 / CIP 104284 / JCM 5825 / NCTC 11152).